The chain runs to 392 residues: Methylthioribose-1-phosphate isomerase (392 aa).

Catalysis depends on D267, which acts as the Proton donor.

This sequence belongs to the eIF-2B alpha/beta/delta subunits family. MtnA subfamily.

It localises to the cytoplasm. Its subcellular location is the nucleus. The enzyme catalyses 5-(methylsulfanyl)-alpha-D-ribose 1-phosphate = 5-(methylsulfanyl)-D-ribulose 1-phosphate. It participates in amino-acid biosynthesis; L-methionine biosynthesis via salvage pathway; L-methionine from S-methyl-5-thio-alpha-D-ribose 1-phosphate: step 1/6. Functionally, catalyzes the interconversion of methylthioribose-1-phosphate (MTR-1-P) into methylthioribulose-1-phosphate (MTRu-1-P). In Blastomyces gilchristii (strain SLH14081) (Blastomyces dermatitidis), this protein is Methylthioribose-1-phosphate isomerase.